The chain runs to 332 residues: Ferredoxin--NADP reductase 2 (332 aa).

Residues Glu37, Gln45, Tyr50, Val90, Phe124, Asp285, and Thr326 each contribute to the FAD site.

This sequence belongs to the ferredoxin--NADP reductase type 2 family. Homodimer. FAD is required as a cofactor.

It catalyses the reaction 2 reduced [2Fe-2S]-[ferredoxin] + NADP(+) + H(+) = 2 oxidized [2Fe-2S]-[ferredoxin] + NADPH. The sequence is that of Ferredoxin--NADP reductase 2 from Bacillus licheniformis (strain ATCC 14580 / DSM 13 / JCM 2505 / CCUG 7422 / NBRC 12200 / NCIMB 9375 / NCTC 10341 / NRRL NRS-1264 / Gibson 46).